Reading from the N-terminus, the 373-residue chain is S-adenosylmethionine:tRNA ribosyltransferase-isomerase (373 aa).

It belongs to the QueA family. As to quaternary structure, monomer.

It is found in the cytoplasm. It catalyses the reaction 7-aminomethyl-7-carbaguanosine(34) in tRNA + S-adenosyl-L-methionine = epoxyqueuosine(34) in tRNA + adenine + L-methionine + 2 H(+). Its pathway is tRNA modification; tRNA-queuosine biosynthesis. In terms of biological role, transfers and isomerizes the ribose moiety from AdoMet to the 7-aminomethyl group of 7-deazaguanine (preQ1-tRNA) to give epoxyqueuosine (oQ-tRNA). The polypeptide is S-adenosylmethionine:tRNA ribosyltransferase-isomerase (Rhizobium etli (strain CIAT 652)).